Reading from the N-terminus, the 1020-residue chain is C protein alpha-antigen (1020 aa).

The N-terminal stretch at 1–41 (MFRRSKNNSYDTSQTKQRFSIKKFKFGAASVLIGLSFLGGV) is a signal peptide. Positions 227–964 (VPDKDKYDPT…EVTVHVTPKP (738 aa)) are 9 X 82 AA tandem repeats. 16 disordered regions span residues 261–281 (DGSK…VPGD), 306–330 (PKPV…GTPV), 342–363 (PDGS…VPGD), 388–445 (PKPV…VPGD), 470–494 (PKPV…GTPV), 506–527 (PDGS…VPGD), 552–576 (PKPV…GTPV), 588–610 (PDGS…PGDH), 634–658 (PKPV…GTPV), 670–692 (PDGS…PGDH), 716–740 (PKPV…GTPV), 752–774 (PDGS…PGDH), 798–822 (PKPV…GTPV), 834–856 (PDGS…PGDH), 880–904 (PKPV…GTPV), and 962–989 (PKPV…KLPA). The span at 272–281 (DRPDTNVPGD) shows a compositional bias: basic and acidic residues. Residues 320–329 (GETTVPQGTP) show a composition bias toward polar residues. Positions 354–363 (DRPDTNVPGD) are enriched in basic and acidic residues. The segment covering 402–411 (GETTVPQGTP) has biased composition (polar residues). Basic and acidic residues predominate over residues 436–445 (DRPDTNVPGD). Positions 484 to 493 (GETTVPQGTP) are enriched in polar residues. Residues 518-527 (DRPDTNVPGD) are compositionally biased toward basic and acidic residues. Over residues 566–575 (GETTVPQGTP) the composition is skewed to polar residues. Basic and acidic residues predominate over residues 600-610 (DRPDTNVPGDH). Over residues 648 to 657 (GETTVPQGTP) the composition is skewed to polar residues. Over residues 682–692 (DRPDTNVPGDH) the composition is skewed to basic and acidic residues. The span at 730-739 (GETTVPQGTP) shows a compositional bias: polar residues. Basic and acidic residues predominate over residues 764–774 (DRPDTNVPGDH). Residues 812-821 (GETTVPQGTP) show a composition bias toward polar residues. Residues 846–856 (DRPDTNVPGDH) are compositionally biased toward basic and acidic residues. Positions 894–903 (GETTVPQGTP) are enriched in polar residues. An LPXTG sorting signal motif is present at residues 987 to 991 (LPATG). T990 carries the pentaglycyl murein peptidoglycan amidated threonine modification. A propeptide spans 991–1020 (GENATPFFNVAALTIISSVGLLSVSKKKED) (removed by sortase).

It is found in the secreted. It localises to the cell wall. Functionally, may play a role in both virulence and immunity. This Streptococcus agalactiae serotype Ia (strain ATCC 27591 / A909 / CDC SS700) protein is C protein alpha-antigen (bca).